The chain runs to 146 residues: Mu-like prophage FluMu G protein 1 (146 aa).

To phage Mu protein G.

The protein is Mu-like prophage FluMu G protein 1 of Haemophilus influenzae (strain ATCC 51907 / DSM 11121 / KW20 / Rd).